The following is a 582-amino-acid chain: Putative frv operon regulatory protein (582 aa).

A DNA-binding region (H-T-H motif) is located at residues 20–39 (PGELAQQTGVSGRTILRDID). The 140-residue stretch at 443 to 582 (RFFSAPGSFH…EAFMELLHKG (140 aa)) folds into the PTS EIIA type-2 domain. His-505 is subject to Phosphohistidine; by HPr.

Could be involved in the regulation of the transcription of the FRV operon. The chain is Putative frv operon regulatory protein (frvR) from Escherichia coli (strain K12).